The chain runs to 452 residues: SAGA complex/transcription factor TFIID complex subunit Taf6 (452 aa).

The region spanning 4–68 (TVWNIESIKD…TSADISSALR (65 aa)) is the Histone-fold domain.

This sequence belongs to the TAF6 family. In terms of assembly, component of the 1.8 MDa SAGA (Spt-Ada-Gcn5 acetyltransferase) complex, which is composed of 19 subunits tra1, spt7, taf5, ngg1/ada3, sgf73, spt20, spt8, taf12, taf6, hfi1/ada1, ubp8, gcn5, ada2, spt3, sgf29, taf10, taf9, sgf11 and sus1. The SAGA complex is composed of 4 modules, namely the HAT (histone acetyltransferase) module (gcn5, ada2, ngg1/ada3 and sgf29), the DUB (deubiquitinating) module (ubp8, sgf11, sgf73 and sus1), the core or TAF (TBP-associated factor) module (taf5, taf6, taf9, taf10 and taf12), and the Tra1 or SPT (Suppressor of Ty) module (tra1, hfi1/ada1, spt3, spt7, spt8 and spt20). The Tra1/SPT module binds activators, the core module recruits TBP (TATA-binding protein), the HAT module contains the histone H3 acetyltransferase gcn5, and the DUB module comprises the histone H2B deubiquitinase ubp8. Interacts with gcn5, taf5 and taf73. Component of the 1.2 MDa TFIID complex, which is composed of TATA-binding protein (TBP) and the 14 TBP-associated factors (TAFs). It comprises 1 copy of each taf1, taf2, taf3, taf7, taf8, taf11, taf13, 2 copies of each taf4, taf5, taf6, taf9, taf10, taf12, and 3 copies of taf14. In TFIID, taf6 heterodimerizes with taf9, forming ultimately an octamer consisting of a taf6-taf9 heterotetramer core flanked by taf4-taf12 dimers on either side, similar to the histone H2A-H2B-H3-H4 octamer.

The protein resides in the nucleus. In terms of biological role, functions as a component of both the DNA-binding general transcription initiation factor complex TFIID and the transcription coactivator SAGA complex. Binding of TFIID to a promoter (with or without TATA element) is the initial step in pre-initiation complex (PIC) formation. TFIID plays a key role in the regulation of gene expression by RNA polymerase II through different activities such as transcription activator interaction, core promoter recognition and selectivity, TFIIA and TFIIB interaction, chromatin modification (histone acetylation by TAF1), facilitation of DNA opening and initiation of transcription. SAGA acts as a general cofactor required for essentially all RNA polymerase II transcription. At the promoters, SAGA is required for transcription pre-initiation complex (PIC) recruitment. It influences RNA polymerase II transcriptional activity through different activities such as TBP interaction (via core/TAF module) and promoter selectivity, interaction with transcription activators (via Tra1/SPT module), and chromatin modification through histone acetylation (via HAT module) and deubiquitination (via DUB module). SAGA preferentially acetylates histones H3 (to form H3K9ac, H3K14ac, H3K18ac and H3K23ac) and H2B and deubiquitinates histone H2B. SAGA interacts with DNA via upstream activating sequences (UASs). This Schizosaccharomyces pombe (strain 972 / ATCC 24843) (Fission yeast) protein is SAGA complex/transcription factor TFIID complex subunit Taf6.